The primary structure comprises 893 residues: Alanine--tRNA ligase (893 aa).

Residues His-574, His-578, Cys-678, and His-682 each coordinate Zn(2+).

The protein belongs to the class-II aminoacyl-tRNA synthetase family. It depends on Zn(2+) as a cofactor.

It localises to the cytoplasm. It catalyses the reaction tRNA(Ala) + L-alanine + ATP = L-alanyl-tRNA(Ala) + AMP + diphosphate. Functionally, catalyzes the attachment of alanine to tRNA(Ala) in a two-step reaction: alanine is first activated by ATP to form Ala-AMP and then transferred to the acceptor end of tRNA(Ala). Also edits incorrectly charged Ser-tRNA(Ala) and Gly-tRNA(Ala) via its editing domain. The polypeptide is Alanine--tRNA ligase (Bifidobacterium longum (strain NCC 2705)).